The chain runs to 86 residues: MANIKSQVKRIRTNEAARLRNQSVKSSLRTAIRSFREAAAAGDKDKANELLVATSRKLDKAASKGVIHANQAANKKSALAQAINKI.

Belongs to the bacterial ribosomal protein bS20 family.

Functionally, binds directly to 16S ribosomal RNA. In Rhodococcus jostii (strain RHA1), this protein is Small ribosomal subunit protein bS20.